Here is a 444-residue protein sequence, read N- to C-terminus: MEQVFADWNFEDNFHMSTNKRSIRPEDELVELLWRDGQVVLQSQARREPSVQVQTHKQETLRKPNNIFLDNQETVQKPNYAALDDQETVSWIQYPPDDVIDPFESEFSSHFFSSIDHLGGPEKPRTIEETVKHEAQAMAPPKFRSSVITVGPSHCGSNQSTNIHQATTLPVSMSDRSKNVEERLDTSSGGSSGCSYGRNNKETVSGTSVTIDRKRKHVMDADQESVSQSDIGLTSTDDQTMGNKSSQRSGSTRRSRAAEVHNLSERRRRDRINERMKALQELIPHCSRTDKASILDEAIDYLKSLQMQLQVMWMGSGMAAAAAAAASPMMFPGVQSSPYINQMAMQSQMQLSQFPVMNRSAPQNHPGLVCQNPVQLQLQAQNQILSEQLARYMGGIPQMPPAGNQMQTVQQQPADMLGFGSPAGPQSQLSAPATTDSLHMGKIG.

An involved in interaction with phyB region spans residues 26–39 (EDELVELLWRDGQV). 2 disordered regions span residues 154-265 (HCGS…NLSE) and 416-444 (MLGF…GKIG). Polar residues predominate over residues 155–171 (CGSNQSTNIHQATTLPV). The span at 175–185 (DRSKNVEERLD) shows a compositional bias: basic and acidic residues. Low complexity predominate over residues 187–197 (SSGGSSGCSYG). Residues 224–244 (ESVSQSDIGLTSTDDQTMGNK) are compositionally biased toward polar residues. Residues 256 to 265 (RAAEVHNLSE) are compositionally biased toward basic and acidic residues. A bHLH domain is found at 256 to 305 (RAAEVHNLSERRRRDRINERMKALQELIPHCSRTDKASILDEAIDYLKSL). Residues 424–437 (GPQSQLSAPATTDS) are compositionally biased toward polar residues. Ser437 carries the phosphoserine modification.

In terms of assembly, homodimer. Interacts specifically with the Pfr form of phytochrome B and with TOC1/APRR1. May form a heterodimer with PIF3. Interacts with PHYB, CRY1 and CRY2 in the nucleus in response to low blue light (LBL). Interacts with TOPP4. Associates to PTAC12/HMR/PAP5 which acts as a transcriptional coactivator. Phosphorylated. Additional phosphorylations induced within 60 seconds following phytochrome B photoactivation. In terms of processing, dephosphorylated by TOPP4 during photomorphogenesis, leading to subsequent degradation of PIF5 by the proteasomal pathway. As to expression, mainly expressed in leaves and seedlings, and, to a lower extent, in stems, fruits, flowers and roots.

Its subcellular location is the nucleus. In terms of biological role, transcription factor acting negatively in the phytochrome B signaling pathway to promote the shade-avoidance response. Regulates PHYB abundance at the post-transcriptional level, possibly via the ubiquitin-proteasome pathway. Promotes ethylene activity in the dark. May regulate the expression of a subset of genes by binding to the G-box motif. Might be involved in the integration of light-signals to control both circadian and photomorphogenic processes. Activated by CRY1 and CRY2 in response to low blue light (LBL) by direct binding at chromatin on E-box variant 5'-CA[CT]GTG-3' to stimulate specific gene expression to adapt global physiology (e.g. hypocotyl elongation in low blue light). This is Transcription factor PIF5 from Arabidopsis thaliana (Mouse-ear cress).